A 463-amino-acid polypeptide reads, in one-letter code: Fumarate hydratase class II (463 aa).

Substrate-binding positions include 97-99 (SGT), 128-131 (HPND), 138-140 (SSN), and Thr186. The Proton donor/acceptor role is filled by His187. Residue Ser317 is part of the active site. Substrate contacts are provided by residues Ser318 and 323 to 325 (KVN).

The protein belongs to the class-II fumarase/aspartase family. Fumarase subfamily. As to quaternary structure, homotetramer.

It localises to the cytoplasm. It carries out the reaction (S)-malate = fumarate + H2O. It participates in carbohydrate metabolism; tricarboxylic acid cycle; (S)-malate from fumarate: step 1/1. Functionally, involved in the TCA cycle. Catalyzes the stereospecific interconversion of fumarate to L-malate. The polypeptide is Fumarate hydratase class II (Campylobacter jejuni subsp. jejuni serotype O:2 (strain ATCC 700819 / NCTC 11168)).